Consider the following 150-residue polypeptide: Large ribosomal subunit protein bL9 (150 aa).

Belongs to the bacterial ribosomal protein bL9 family.

Functionally, binds to the 23S rRNA. This is Large ribosomal subunit protein bL9 from Paraburkholderia xenovorans (strain LB400).